The following is a 158-amino-acid chain: Large ribosomal subunit protein bL21 (158 aa).

Positions serine 106 to aspartate 158 are disordered. The span at proline 115–threonine 143 shows a compositional bias: basic and acidic residues. Low complexity predominate over residues glutamine 146–aspartate 158.

The protein belongs to the bacterial ribosomal protein bL21 family. Part of the 50S ribosomal subunit. Contacts protein L20.

Functionally, this protein binds to 23S rRNA in the presence of protein L20. This Bartonella tribocorum (strain CIP 105476 / IBS 506) protein is Large ribosomal subunit protein bL21.